A 230-amino-acid chain; its full sequence is MSLGKRMGAELIGTFWLVLGGCGSAVLAASSPLGIGVLGVAFAFGLTVLTMAFAIGHISGCHLNPAVSFGLVVGGRFPAKELLPYVIAQVIGAILAAGVIYLIASGKAGFELSAGLASNGYADHSPGGYTLGAGFVSEVVMTAMFLVVIMGATDARAPAGFAPIAIGLALTLIHLISIPVTNTSVNPARSTGPALFVGGWALQQLWLFWVAPLIGAAIGGALYRGLAKEP.

The next 2 membrane-spanning stretches (helical) occupy residues 9–29 and 35–55; these read AELIGTFWLVLGGCGSAVLAA and IGVLGVAFAFGLTVLTMAFAI. An NPA 1 motif is present at residues 64-66; sequence NPA. The next 3 membrane-spanning stretches (helical) occupy residues 83 to 103, 131 to 151, and 160 to 180; these read LPYVIAQVIGAILAAGVIYLI, LGAGFVSEVVMTAMFLVVIMG, and GFAPIAIGLALTLIHLISIPV. The NPA 2 signature appears at 186–188; it reads NPA. The helical transmembrane segment at 194–214 threads the bilayer; that stretch reads ALFVGGWALQQLWLFWVAPLI.

It belongs to the MIP/aquaporin (TC 1.A.8) family. Homotetramer.

The protein resides in the cell inner membrane. The enzyme catalyses H2O(in) = H2O(out). In terms of biological role, channel that permits osmotically driven movement of water in both directions. It is involved in the osmoregulation and in the maintenance of cell turgor during volume expansion in rapidly growing cells. It mediates rapid entry or exit of water in response to abrupt changes in osmolarity. This Pseudomonas putida (strain ATCC 47054 / DSM 6125 / CFBP 8728 / NCIMB 11950 / KT2440) protein is Aquaporin Z.